The chain runs to 225 residues: ATP-dependent Clp protease proteolytic subunit (225 aa).

Catalysis depends on S123, which acts as the Nucleophile. Residue H148 is part of the active site.

It belongs to the peptidase S14 family. As to quaternary structure, fourteen ClpP subunits assemble into 2 heptameric rings which stack back to back to give a disk-like structure with a central cavity, resembling the structure of eukaryotic proteasomes.

The protein resides in the cytoplasm. It catalyses the reaction Hydrolysis of proteins to small peptides in the presence of ATP and magnesium. alpha-casein is the usual test substrate. In the absence of ATP, only oligopeptides shorter than five residues are hydrolyzed (such as succinyl-Leu-Tyr-|-NHMec, and Leu-Tyr-Leu-|-Tyr-Trp, in which cleavage of the -Tyr-|-Leu- and -Tyr-|-Trp bonds also occurs).. In terms of biological role, cleaves peptides in various proteins in a process that requires ATP hydrolysis. Has a chymotrypsin-like activity. Plays a major role in the degradation of misfolded proteins. The polypeptide is ATP-dependent Clp protease proteolytic subunit (Chlorobium phaeovibrioides (strain DSM 265 / 1930) (Prosthecochloris vibrioformis (strain DSM 265))).